The sequence spans 226 residues: 8-oxoguanine DNA glycosylase/AP lyase (226 aa).

Residues K149 and D167 contribute to the active site.

This sequence belongs to the type-2 OGG1 family.

The catalysed reaction is 2'-deoxyribonucleotide-(2'-deoxyribose 5'-phosphate)-2'-deoxyribonucleotide-DNA = a 3'-end 2'-deoxyribonucleotide-(2,3-dehydro-2,3-deoxyribose 5'-phosphate)-DNA + a 5'-end 5'-phospho-2'-deoxyribonucleoside-DNA + H(+). In terms of biological role, catalyzes the excision of an oxidatively damaged form of guanine (7,8-dihydro-8-oxoguanine = 8-oxoG) from DNA. Also cleaves the DNA backbone at apurinic/apyrimidinic sites (AP sites). The chain is 8-oxoguanine DNA glycosylase/AP lyase from Aquifex aeolicus (strain VF5).